Here is a 532-residue protein sequence, read N- to C-terminus: Probable alpha-galactosidase A (532 aa).

Residues 1 to 21 (MDTTKSLLSTLIAIMIPLSLG) form the signal peptide. Cys-44 and Cys-76 form a disulfide bridge. N-linked (GlcNAc...) asparagine glycosylation is found at Asn-47, Asn-91, and Asn-121. Cys-124 and Cys-154 form a disulfide bridge. Asp-152 (nucleophile) is an active-site residue. N-linked (GlcNAc...) asparagine glycosylation is present at Asn-201. The active-site Proton donor is Asp-210. Residues 410–531 (CSTVIPTGIV…GLPSGVDIKP (122 aa)) enclose the Ricin B-type lectin domain. 2 disulfides stabilise this stretch: Cys-427-Cys-441 and Cys-466-Cys-478.

Belongs to the glycosyl hydrolase 27 family.

The protein localises to the secreted. The catalysed reaction is Hydrolysis of terminal, non-reducing alpha-D-galactose residues in alpha-D-galactosides, including galactose oligosaccharides, galactomannans and galactolipids.. In terms of biological role, hydrolyzes a variety of simple alpha-D-galactoside as well as more complex molecules such as oligosaccharides and polysaccharides. The sequence is that of Probable alpha-galactosidase A (aglA) from Aspergillus fumigatus (strain ATCC MYA-4609 / CBS 101355 / FGSC A1100 / Af293) (Neosartorya fumigata).